Consider the following 143-residue polypeptide: Period circadian protein (143 aa).

The segment at 25–130 is disordered; it reads NSKPVTAPTQ…GPSLAADNSI (106 aa). Composition is skewed to low complexity over residues 71-93 and 114-126; these read SGNCTTNSNIRMSSFTNTSITGT and GGAAADAGPSLAA.

Forms a heterodimer with timeless (TIM); the complex then translocates into the nucleus. Post-translationally, phosphorylated with a circadian rhythmicity, probably by the double-time protein (dbt). Phosphorylation could be implicated in the stability of per monomer and in the formation of heterodimer per-tim.

The protein resides in the nucleus. Its subcellular location is the cytoplasm. It localises to the perinuclear region. Its function is as follows. Essential for biological clock functions. Determines the period length of circadian and ultradian rhythms; an increase in PER dosage leads to shortened circadian rhythms and a decrease leads to lengthened circadian rhythms. Essential for the circadian rhythmicity of locomotor activity, eclosion behavior, and for the rhythmic component of the male courtship song that originates in the thoracic nervous system. The biological cycle depends on the rhythmic formation and nuclear localization of the TIM-PER complex. Light induces the degradation of TIM, which promotes elimination of PER. Nuclear activity of the heterodimer coordinatively regulates PER and TIM transcription through a negative feedback loop. Behaves as a negative element in circadian transcriptional loop. Does not appear to bind DNA, suggesting indirect transcriptional inhibition. In Drosophila picticornis (Fruit fly), this protein is Period circadian protein (per).